Consider the following 28-residue polypeptide: Ranatuerin-2BYb (28 aa).

The cysteines at positions 23 and 28 are disulfide-linked.

In terms of tissue distribution, expressed by the skin glands.

The protein localises to the secreted. In terms of biological role, antibacterial activity against Gram-negative bacterium E.coli. Very weak hemolysis activity. In Rana boylii (Foothill yellow-legged frog), this protein is Ranatuerin-2BYb.